The following is a 240-amino-acid chain: Regulatory protein SdiA (240 aa).

The 66-residue stretch at 173-238 (VMTPEMNFSK…QVACYAAATG (66 aa)) folds into the HTH luxR-type domain. Residues 197 to 216 (SAEIAMILSISENTVNFHQK) constitute a DNA-binding region (H-T-H motif).

Activates cell division by specifically increasing transcription from one of the two promoters that lie immediately upstream of the ftsQAZ gene cluster. Activates ydiV expression in response to extracellular autoinducer AI-1 (Vibrio fischeri autoinducer oxoC6). This is Regulatory protein SdiA (sdiA) from Escherichia coli (strain K12).